Consider the following 319-residue polypeptide: MSVDLSAQQVTRMKKLQKKIRSEVGKAISDYNMVEEGDRIMCCLSGGKDSYAMLDILLDLQQRAPIKFEIVAVNLDQKQPGFPEHVLPAYLDSLGVAYHILEKDTYSIVRDKIPEGQKTCSLCSRLRRGTLYGFAQKIGATKIALGHHRDDIIETLFLNMFFAGKQKAMPPKLLSDDGANMVIRPLAYAREKDIAEYAELKGFPIIPCNLCGSQENLKRASVKEMLNQWDVEHPGRIESIFTAMQNTSPSQGVDREQFDFISLTRDANAPLKGEVAESDLPAFDFVDVSNNGHIDLDAASKAKRVNPEHKINIVSTYTP.

Positions 45–50 (SGGKDS) match the PP-loop motif motif. Cys-120, Cys-123, and Cys-211 together coordinate [4Fe-4S] cluster.

It belongs to the TtcA family. In terms of assembly, homodimer. Requires Mg(2+) as cofactor. The cofactor is [4Fe-4S] cluster.

It localises to the cytoplasm. It catalyses the reaction cytidine(32) in tRNA + S-sulfanyl-L-cysteinyl-[cysteine desulfurase] + AH2 + ATP = 2-thiocytidine(32) in tRNA + L-cysteinyl-[cysteine desulfurase] + A + AMP + diphosphate + H(+). The protein operates within tRNA modification. Its function is as follows. Catalyzes the ATP-dependent 2-thiolation of cytidine in position 32 of tRNA, to form 2-thiocytidine (s(2)C32). The sulfur atoms are provided by the cysteine/cysteine desulfurase (IscS) system. In Shewanella woodyi (strain ATCC 51908 / MS32), this protein is tRNA-cytidine(32) 2-sulfurtransferase.